We begin with the raw amino-acid sequence, 143 residues long: Ribosome-binding factor A (143 aa).

The interval 1-20 is disordered; sequence MRFMGKNKFHTGPGPSQRQL.

Belongs to the RbfA family. As to quaternary structure, monomer. Binds 30S ribosomal subunits, but not 50S ribosomal subunits or 70S ribosomes.

The protein resides in the cytoplasm. One of several proteins that assist in the late maturation steps of the functional core of the 30S ribosomal subunit. Associates with free 30S ribosomal subunits (but not with 30S subunits that are part of 70S ribosomes or polysomes). Required for efficient processing of 16S rRNA. May interact with the 5'-terminal helix region of 16S rRNA. The chain is Ribosome-binding factor A from Roseobacter denitrificans (strain ATCC 33942 / OCh 114) (Erythrobacter sp. (strain OCh 114)).